We begin with the raw amino-acid sequence, 1203 residues long: MSEVKLTPEQNEAIHSSGKNILVSASAGSGKTFVMAQRIVEKVKQGIEIDRLFISTFTKKAASELRMRLERDLKKARQESSDDEEAHRLTLALHNLSNADIGTMDSFTQKLTKANFNRVNIDPNFRILADQTESDLIRQEVFEQLVESYLSADESLNISKDKFEKLIKNFSKDRNILGFQKVVYTIYRFASATENPISWLENQFLKGFETYKSLTDLSEDFTVNVKENLLTFFELLENSLTNGVIAKKGAGRDKANLILDNKNELLEAISKKDFVTFTALFLSIDTDIRVGSSKDETLSALKKDFSAQKQDLVGSKSKPGELRKFVDKIKHGQLIEKYQKQAFEIASDLQKFIIEFYKTYLERKKNENAFEYSDIAHFAIEILEENPDIRENLREHYDEIMIDEYQDTSHTQERMLELLSNGHNLFMVGDIKQSIYGFRLADPGLFLEKYKSYDQAENPNQLIRLKENFRSRGEVLNFTNDIFKHLMDEKLGEMTYGKEKALVQGNISDYPVEAEKDFYPELLLYKENTSEEEIEDSEVKISDGEIKGAAQEIKKLIESGVEPKDIAILVRSKSNNNKIEDILLSYDIPVILDEGRVDFLKSMEVLIMLDILRAIDNPLYDLSLVAMLRSPLFGFNEDELTRISVQGSRDLRFWDKILLSLKKEGKNPELINLSLEQKLKAFNQKFTEWRKLVNQIPIHRLLWKIYTETYYFDYVGALKNGEMRQANLQALSVRAESYESSGYKGLFKFVRLINKFMEQNNDLASVNIKLPQNAVRVMTFHKSKGLEFDYVFLMNLQSRFNDRDLKEDVILSREHGLGMKYIADLKAEPDVITDFPYALVKMETFPYMVNKDLKQRAALSEEMRVLYVAFTRAKKKLYLVGKIKDTDKKAGLELYDTATLEGKILSDKFRNSSRGFQHWILALQNATKLPMKLNVYTKDELETEKLEFTSQPDFKKLVEESEKFDNIMSFSDEIKEAQKIMNYQYPHQAATELSSIQTPSQVKKRSYEKQLQVGEVQPVSEFVRVKNLDFSDFGSKKITAAEIGSATHSFMQYADFSQADLFSFQATLDEMGFDEKIKNQIDITKILTLFDTEFGKFLSENVDKTVKEAPFSMLRTDEFAKEQYIVRGICDGFVKIADKIILFDYKTDRFTNVSAISEIKERYKDQMNLYSEALQKAYHVNQIDKYLILLGGPRKVFVEKLDD.

The UvrD-like helicase ATP-binding domain maps to 4 to 472 (VKLTPEQNEA…IRLKENFRSR (469 aa)). 25-32 (ASAGSGKT) serves as a coordination point for ATP. In terms of domain architecture, UvrD-like helicase C-terminal spans 503-785 (VQGNISDYPV…RVMTFHKSKG (283 aa)).

It belongs to the helicase family. AddA subfamily. As to quaternary structure, heterodimer of AddA and AddB/RexB. Requires Mg(2+) as cofactor.

The catalysed reaction is Couples ATP hydrolysis with the unwinding of duplex DNA by translocating in the 3'-5' direction.. The enzyme catalyses ATP + H2O = ADP + phosphate + H(+). Its function is as follows. The heterodimer acts as both an ATP-dependent DNA helicase and an ATP-dependent, dual-direction single-stranded exonuclease. Recognizes the chi site generating a DNA molecule suitable for the initiation of homologous recombination. The AddA nuclease domain is required for chi fragment generation; this subunit has the helicase and 3' -&gt; 5' nuclease activities. The sequence is that of ATP-dependent helicase/nuclease subunit A from Lactococcus lactis subsp. cremoris (strain SK11).